The chain runs to 135 residues: MRHYEIVFMVHPDQSEQVAGMIERYTGVITDANGKIHRLEDWGRRQLAYPIQDLHKAHYVLMNVEATAESVEELETAFRFNDAVLRSMVMRTKGAITEASPMAKAKDERDARRAAISERSSEADEVEENAEESAE.

The tract at residues 98-135 (EASPMAKAKDERDARRAAISERSSEADEVEENAEESAE) is disordered. A compositionally biased stretch (basic and acidic residues) spans 104–122 (KAKDERDARRAAISERSSE). The span at 123–135 (ADEVEENAEESAE) shows a compositional bias: acidic residues.

Belongs to the bacterial ribosomal protein bS6 family.

Functionally, binds together with bS18 to 16S ribosomal RNA. This chain is Small ribosomal subunit protein bS6, found in Shewanella amazonensis (strain ATCC BAA-1098 / SB2B).